Here is a 242-residue protein sequence, read N- to C-terminus: Glutathione S-transferase 3 (242 aa).

One can recognise a GST N-terminal domain in the interval 1 to 79 (MIVLHHLKNS…HLVRKYGPSF (79 aa)). One can recognise a GST C-terminal domain in the interval 85–234 (DVAELEKYEL…ERYSHPPTPP (150 aa)). Serine 228 is subject to Phosphoserine. Threonine 232 is modified (phosphothreonine).

The protein belongs to the GST superfamily. In terms of assembly, interacts with sad1.

The protein localises to the cytoplasm. It catalyses the reaction RX + glutathione = an S-substituted glutathione + a halide anion + H(+). In terms of biological role, may have a role in the detoxification of various heavy metals. In Schizosaccharomyces pombe (strain 972 / ATCC 24843) (Fission yeast), this protein is Glutathione S-transferase 3 (gst3).